Here is a 324-residue protein sequence, read N- to C-terminus: S-methyl-5'-thioadenosine phosphorylase (324 aa).

Phosphate-binding positions include Ser-14, 57-58 (RH), and 90-91 (SA). Substrate is bound at residue Met-196. Ser-197 lines the phosphate pocket. 220 to 222 (DYD) provides a ligand contact to substrate.

It belongs to the PNP/MTAP phosphorylase family. MTAP subfamily. As to quaternary structure, homotrimer.

Its subcellular location is the cytoplasm. It localises to the nucleus. The enzyme catalyses S-methyl-5'-thioadenosine + phosphate = 5-(methylsulfanyl)-alpha-D-ribose 1-phosphate + adenine. The protein operates within amino-acid biosynthesis; L-methionine biosynthesis via salvage pathway; S-methyl-5-thio-alpha-D-ribose 1-phosphate from S-methyl-5'-thioadenosine (phosphorylase route): step 1/1. Catalyzes the reversible phosphorylation of S-methyl-5'-thioadenosine (MTA) to adenine and 5-methylthioribose-1-phosphate. Involved in the breakdown of MTA, a major by-product of polyamine biosynthesis. Responsible for the first step in the methionine salvage pathway after MTA has been generated from S-adenosylmethionine. Has broad substrate specificity with 6-aminopurine nucleosides as preferred substrates. The sequence is that of S-methyl-5'-thioadenosine phosphorylase from Coprinopsis cinerea (strain Okayama-7 / 130 / ATCC MYA-4618 / FGSC 9003) (Inky cap fungus).